The sequence spans 336 residues: DNA polymerase III subunit delta' (336 aa).

As to quaternary structure, DNA polymerase III contains a core (composed of alpha, epsilon and theta chains) that associates with a tau subunit. This core dimerizes to form the POLIII' complex. PolIII' associates with the gamma complex (composed of gamma, delta, delta', psi and chi chains) and with the beta chain to form the complete DNA polymerase III complex.

The catalysed reaction is DNA(n) + a 2'-deoxyribonucleoside 5'-triphosphate = DNA(n+1) + diphosphate. Its function is as follows. DNA polymerase III is a complex, multichain enzyme responsible for most of the replicative synthesis in bacteria. This DNA polymerase also exhibits 3' to 5' exonuclease activity. This chain is DNA polymerase III subunit delta' (holB), found in Buchnera aphidicola subsp. Baizongia pistaciae (strain Bp).